The following is a 431-amino-acid chain: Glutamyl-tRNA(Gln) amidotransferase subunit A (431 aa).

Catalysis depends on charge relay system residues Lys55 and Ser130. Ser154 serves as the catalytic Acyl-ester intermediate.

Belongs to the amidase family. GatA subfamily. Heterotrimer of A, B and C subunits.

The enzyme catalyses L-glutamyl-tRNA(Gln) + L-glutamine + ATP + H2O = L-glutaminyl-tRNA(Gln) + L-glutamate + ADP + phosphate + H(+). Functionally, allows the formation of correctly charged Gln-tRNA(Gln) through the transamidation of misacylated Glu-tRNA(Gln) in organisms which lack glutaminyl-tRNA synthetase. The reaction takes place in the presence of glutamine and ATP through an activated gamma-phospho-Glu-tRNA(Gln). In Methanococcus vannielii (strain ATCC 35089 / DSM 1224 / JCM 13029 / OCM 148 / SB), this protein is Glutamyl-tRNA(Gln) amidotransferase subunit A.